A 250-amino-acid chain; its full sequence is 1-(5-phosphoribosyl)-5-[(5-phosphoribosylamino)methylideneamino] imidazole-4-carboxamide isomerase (250 aa).

Asp8 functions as the Proton acceptor in the catalytic mechanism. The Proton donor role is filled by Asp131.

This sequence belongs to the HisA/HisF family.

The protein resides in the cytoplasm. It catalyses the reaction 1-(5-phospho-beta-D-ribosyl)-5-[(5-phospho-beta-D-ribosylamino)methylideneamino]imidazole-4-carboxamide = 5-[(5-phospho-1-deoxy-D-ribulos-1-ylimino)methylamino]-1-(5-phospho-beta-D-ribosyl)imidazole-4-carboxamide. It functions in the pathway amino-acid biosynthesis; L-histidine biosynthesis; L-histidine from 5-phospho-alpha-D-ribose 1-diphosphate: step 4/9. The sequence is that of 1-(5-phosphoribosyl)-5-[(5-phosphoribosylamino)methylideneamino] imidazole-4-carboxamide isomerase from Paraburkholderia phymatum (strain DSM 17167 / CIP 108236 / LMG 21445 / STM815) (Burkholderia phymatum).